An 801-amino-acid polypeptide reads, in one-letter code: Probable inorganic carbon transporter subunit DabA (801 aa).

Residues Cys-298, Asp-300, His-481, and Cys-496 each contribute to the Zn(2+) site. The disordered stretch occupies residues 575-596; sequence RENAAAERAESMGSDASSGVSE.

It belongs to the inorganic carbon transporter (TC 9.A.2) DabA family. Forms a complex with DabB. The cofactor is Zn(2+).

Its subcellular location is the cell membrane. Part of an energy-coupled inorganic carbon pump. The sequence is that of Probable inorganic carbon transporter subunit DabA from Haloarcula marismortui (strain ATCC 43049 / DSM 3752 / JCM 8966 / VKM B-1809) (Halobacterium marismortui).